The chain runs to 105 residues: Heat shock protein HspQ (105 aa).

Positions 75–105 (SELQDEHPEQPSMDELAQTIRKQLQAPRLRN) are disordered.

The protein belongs to the HspQ family.

It is found in the cytoplasm. Functionally, involved in the degradation of certain denaturated proteins, including DnaA, during heat shock stress. The protein is Heat shock protein HspQ of Escherichia coli O127:H6 (strain E2348/69 / EPEC).